We begin with the raw amino-acid sequence, 849 residues long: G-type lectin S-receptor-like serine/threonine-protein kinase B120 (849 aa).

Residues methionine 1 to alanine 25 form the signal peptide. Residues alanine 26–phenylalanine 153 form the Bulb-type lectin domain. The Extracellular portion of the chain corresponds to alanine 26–lysine 438. 6 N-linked (GlcNAc...) asparagine glycosylation sites follow: asparagine 110, asparagine 191, asparagine 210, asparagine 230, asparagine 273, and asparagine 282. The region spanning proline 295–glycine 332 is the EGF-like; atypical domain. Cystine bridges form between cysteine 299–cysteine 311 and cysteine 305–cysteine 320. Asparagine 333, asparagine 349, and asparagine 388 each carry an N-linked (GlcNAc...) asparagine glycan. The region spanning cysteine 346 to alanine 427 is the PAN domain. Intrachain disulfides connect cysteine 381-cysteine 402 and cysteine 385-cysteine 391. Residues isoleucine 439–leucine 459 form a helical membrane-spanning segment. The Cytoplasmic portion of the chain corresponds to tryptophan 460–arginine 849. The region spanning phenylalanine 529–phenylalanine 814 is the Protein kinase domain. ATP is bound by residues leucine 535 to valine 543 and lysine 557. Serine 563 is subject to Phosphoserine. The segment at threonine 618–isoleucine 635 is caM-binding. Aspartate 654 serves as the catalytic Proton acceptor. Phosphoserine occurs at positions 658 and 671. At threonine 688 the chain carries Phosphothreonine. A phosphoserine mark is found at serine 732 and serine 837. Threonine 844 is subject to Phosphothreonine.

Belongs to the protein kinase superfamily. Ser/Thr protein kinase family.

It localises to the cell membrane. It carries out the reaction L-seryl-[protein] + ATP = O-phospho-L-seryl-[protein] + ADP + H(+). It catalyses the reaction L-threonyl-[protein] + ATP = O-phospho-L-threonyl-[protein] + ADP + H(+). This Arabidopsis thaliana (Mouse-ear cress) protein is G-type lectin S-receptor-like serine/threonine-protein kinase B120 (B120).